Consider the following 375-residue polypeptide: Guanine nucleotide-binding protein subunit beta (375 aa).

7 WD repeats span residues 63–93 (GHTGKVYSLDWTPEKNRIVSASQDGRLIVWN), 105–135 (LPCAWVMTCAFSPSGQSVACGGLDSVCSIYN), 154–185 (GHKGYVSSCQYVPDEDTHLITSSGDQTCVLWD), 202–233 (GHTADVQSVSISSSNPRLFVSGSCDTTARLWD), 246–276 (GHEGDVNTVKFFPDGNRFGTGSEDGTCRLFD), 293–323 (GDIPHVTSMAFSISGRLLFVGYSNGDCYVWD), and 339–369 (SHEGRISCLGLSADGSALCTGSWDTNLKIWA).

It belongs to the WD repeat G protein beta family. As to quaternary structure, g proteins are composed of 3 units, alpha, beta and gamma.

Functionally, guanine nucleotide-binding proteins (G proteins) are involved as a modulator or transducer in various transmembrane signaling systems. The beta and gamma chains are required for the GTPase activity, for replacement of GDP by GTP, and for G protein-effector interaction. In Nicotiana tabacum (Common tobacco), this protein is Guanine nucleotide-binding protein subunit beta.